Reading from the N-terminus, the 367-residue chain is Probable 7-methylxanthine methyltransferase 2 (367 aa).

Y20 serves as a coordination point for S-adenosyl-L-homocysteine. Residue T27 coordinates theobromine. 6 residues coordinate S-adenosyl-L-homocysteine: C64, Q69, D101, L102, S134, and F135. Y152, H155, and W156 together coordinate theobromine. N172, D258, F260, and N261 together coordinate Mg(2+). F313 is a binding site for theobromine.

It belongs to the methyltransferase superfamily. Type-7 methyltransferase family. Requires Mg(2+) as cofactor.

The enzyme catalyses 7-methylxanthine + S-adenosyl-L-methionine = theobromine + S-adenosyl-L-homocysteine + H(+). The protein operates within alkaloid biosynthesis. In terms of biological role, involved in the biosynthesis of theobromine. The chain is Probable 7-methylxanthine methyltransferase 2 from Theobroma cacao (Cacao).